The primary structure comprises 347 residues: MNPLALSLILTTLLAGTLITMMSSHWLTAWMGLEMNMLTMIPILMKTTNPRSTEAATKYFMTQATASMMLMMALTINLMYSGQWSIMKMTNPVASNVALMALMTKLGSAPFHFWVPEVTQGVELTSGMILLTWQKLAPLSLLYQMATYTNTNLIYLSGLLSILIGGWGGLNQTQLRKILAYSSISHMGWMLIILPFNPTLTLLNLAIYILLTLSIFMILANTLTTSMSSLTLMWNKTPAMTIMLMTTLLSLGGLPPLSGFTPKWLMIHELTKNNSIIMPLTMAIMTLLNMYFYMRLIYYSSLTILPSTNNMKMTWQFTSTKHTMMLPTLITLSNMLLPLTPMISMLE.

The next 10 helical transmembrane spans lie at 3–23, 25–45, 59–79, 93–115, 150–170, 178–198, 200–220, 240–260, 274–294, and 326–346; these read PLAL…TMMS, HWLT…PILM, YFMT…INLM, VASN…HFWV, NTNL…WGGL, ILAY…PFNP, LTLL…MILA, MTIM…LSGF, NSII…YFYM, and LPTL…ISML.

Belongs to the complex I subunit 2 family. As to quaternary structure, core subunit of respiratory chain NADH dehydrogenase (Complex I) which is composed of 45 different subunits. Interacts with TMEM242.

It localises to the mitochondrion inner membrane. It carries out the reaction a ubiquinone + NADH + 5 H(+)(in) = a ubiquinol + NAD(+) + 4 H(+)(out). Its function is as follows. Core subunit of the mitochondrial membrane respiratory chain NADH dehydrogenase (Complex I) which catalyzes electron transfer from NADH through the respiratory chain, using ubiquinone as an electron acceptor. Essential for the catalytic activity and assembly of complex I. This is NADH-ubiquinone oxidoreductase chain 2 from Mammuthus primigenius (Siberian woolly mammoth).